The following is a 461-amino-acid chain: Protein-serine O-palmitoleoyltransferase porcupine (461 aa).

At 1 to 17 (MATFSRQEFFQQLLQGC) the chain is on the cytoplasmic side. The helical transmembrane segment at 18 to 38 (LLPTAQQGLDQIWLLLAICLA) threads the bilayer. Over 39–66 (CRLLWRLGLPSYLKHASTVAGGFFSLYH) the chain is Extracellular. A helical membrane pass occupies residues 67 to 87 (FFQLHMVWVVLLSLLCYLVLF). Over 88-95 (LCRHSSHR) the chain is Cytoplasmic. A helical transmembrane segment spans residues 96-116 (GVFLSVTILIYLLMGEMHMVD). Topologically, residues 117 to 152 (TVTWHKMRGAQMIVAMKAVSLGFDLDRGEVGTVPSP) are extracellular. Residues 153-173 (VEFMGYLYFVGTIVFGPWISF) traverse the membrane as a helical segment. The Cytoplasmic segment spans residues 174 to 198 (HSYLQAVQGRPLSCRWLQKVARSLA). Cysteine 187 is lipidated: S-palmitoyl cysteine. A helical transmembrane segment spans residues 199-219 (LALLCLVLSTCVGPYLFPYFI). At 220–252 (PLNGDRLLRNKKRKARGTMVRWLRAYESAVSFH) the chain is on the extracellular side. A helical membrane pass occupies residues 253–273 (FSNYFVGFLSEATATLAGAGF). Topologically, residues 274-337 (TEEKDHLEWD…SAVLVTYAAS (64 aa)) are cytoplasmic. Residues 338–358 (ALLHGFSFHLAAVLLSLAFIT) form a helical membrane-spanning segment. Residue histidine 341 is part of the active site. The Extracellular portion of the chain corresponds to 359–396 (YVEHVLRKRLARILSACVLSKRCPPDCSHQHRLGLGVR). The helical transmembrane segment at 397 to 417 (ALNLLFGALAIFHLAYLGSLF) threads the bilayer. Residues 418–461 (DVDVDDTTEEQGYGMAYTVHKWSELSWASHWVTFGCWIFYRLIG) are Cytoplasmic-facing.

The protein belongs to the membrane-bound acyltransferase family. Porcupine subfamily. As to quaternary structure, interacts with WNT1, WNT3, WNT3A, WNT4, WNT5A, WNT5B, WNT6, WNT7A and WNT7B. In terms of tissue distribution, isoform 1 is expressed in fetal brain, brain, amygdala, caudate nucleus, cerebellum, hippocampus, pituitary, thalamus, heart, skeletal muscle and testis. Isoform 4 is expressed in amygdala, corpus callosum, hippocampus, spinal cord, kidney, liver, lung, spleen, uterus, testis. Isoform 2 and isoform 3 are expressed in substantia negra, spinal cord, heart and lung.

Its subcellular location is the endoplasmic reticulum membrane. It catalyses the reaction [Wnt protein]-L-serine + (9Z)-hexadecenoyl-CoA = [Wnt protein]-O-(9Z)-hexadecenoyl-L-serine + CoA. Its function is as follows. Protein-serine O-palmitoleoyltransferase that acts as a key regulator of the Wnt signaling pathway by mediating the attachment of palmitoleate, a 16-carbon monounsaturated fatty acid (C16:1(9Z)), to Wnt proteins. Serine palmitoleoylation of WNT proteins is required for efficient binding to frizzled receptors. The sequence is that of Protein-serine O-palmitoleoyltransferase porcupine from Homo sapiens (Human).